The chain runs to 543 residues: Myotubularin-related protein 9-like (543 aa).

One can recognise a Myotubularin phosphatase domain in the interval 124–502 (AWHFHPPECY…QSLRLWQGLF (379 aa)).

Belongs to the protein-tyrosine phosphatase family. Non-receptor class myotubularin subfamily.

Functionally, probable pseudophosphatase. This is Myotubularin-related protein 9-like from Bos taurus (Bovine).